The sequence spans 429 residues: Glutamate-1-semialdehyde 2,1-aminomutase (429 aa).

N6-(pyridoxal phosphate)lysine is present on K267.

Belongs to the class-III pyridoxal-phosphate-dependent aminotransferase family. HemL subfamily. As to quaternary structure, homodimer. It depends on pyridoxal 5'-phosphate as a cofactor.

It localises to the cytoplasm. The catalysed reaction is (S)-4-amino-5-oxopentanoate = 5-aminolevulinate. The protein operates within porphyrin-containing compound metabolism; protoporphyrin-IX biosynthesis; 5-aminolevulinate from L-glutamyl-tRNA(Glu): step 2/2. In Stenotrophomonas maltophilia (strain R551-3), this protein is Glutamate-1-semialdehyde 2,1-aminomutase.